The sequence spans 493 residues: Ribose import ATP-binding protein RbsA (493 aa).

ABC transporter domains are found at residues 3-239 (IEMK…VGRE) and 246-493 (KRTP…TGGR). ATP is bound at residue 35-42 (GENGAGKS).

It belongs to the ABC transporter superfamily. Ribose importer (TC 3.A.1.2.1) family. The complex is composed of an ATP-binding protein (RbsA), two transmembrane proteins (RbsC) and a solute-binding protein (RbsB).

It localises to the cell membrane. It catalyses the reaction D-ribose(out) + ATP + H2O = D-ribose(in) + ADP + phosphate + H(+). Functionally, part of the ABC transporter complex RbsABC involved in ribose import. Responsible for energy coupling to the transport system. This chain is Ribose import ATP-binding protein RbsA, found in Bacillus subtilis (strain 168).